The chain runs to 78 residues: Acyl carrier protein BQ2027_MB0103 (78 aa).

A Carrier domain is found at 1–78 (MRDRILAAVC…ELEAVCTEFG (78 aa)). Ser-35 carries the post-translational modification O-(pantetheine 4'-phosphoryl)serine.

It belongs to the acyl carrier protein (ACP) family. The cofactor is pantetheine 4'-phosphate.

Its pathway is lipid metabolism; fatty acid metabolism. Its function is as follows. Acyl-carrier protein (ACP) involved in the biosynthesis of a unique class of isonitrile lipopeptides (INLPs) that seem to play a role in metal acquisition. Is the dedicated ACP for the loading of activated acyl groups catalyzed by FadD10. This Mycobacterium bovis (strain ATCC BAA-935 / AF2122/97) protein is Acyl carrier protein BQ2027_MB0103.